The chain runs to 130 residues: Small ribosomal subunit protein uS11 (130 aa).

The segment at 109-130 (EDVTPIPHDGTGRPGGKRGRRV) is disordered.

The protein belongs to the universal ribosomal protein uS11 family. Part of the 30S ribosomal subunit.

Its function is as follows. Located on the platform of the 30S subunit. The chain is Small ribosomal subunit protein uS11 from Methanosphaera stadtmanae (strain ATCC 43021 / DSM 3091 / JCM 11832 / MCB-3).